Here is a 164-residue protein sequence, read N- to C-terminus: Large ribosomal subunit protein uL10 (164 aa).

It belongs to the universal ribosomal protein uL10 family. Part of the ribosomal stalk of the 50S ribosomal subunit. The N-terminus interacts with L11 and the large rRNA to form the base of the stalk. The C-terminus forms an elongated spine to which L12 dimers bind in a sequential fashion forming a multimeric L10(L12)X complex.

Its function is as follows. Forms part of the ribosomal stalk, playing a central role in the interaction of the ribosome with GTP-bound translation factors. In Photobacterium profundum (strain SS9), this protein is Large ribosomal subunit protein uL10.